The sequence spans 338 residues: Uroporphyrinogen decarboxylase (338 aa).

Residues 27-31, Asp-77, Tyr-151, Ser-203, and His-317 each bind substrate; that span reads RQAGR.

It belongs to the uroporphyrinogen decarboxylase family. In terms of assembly, homodimer.

It localises to the cytoplasm. It carries out the reaction uroporphyrinogen III + 4 H(+) = coproporphyrinogen III + 4 CO2. The protein operates within porphyrin-containing compound metabolism; protoporphyrin-IX biosynthesis; coproporphyrinogen-III from 5-aminolevulinate: step 4/4. In terms of biological role, catalyzes the decarboxylation of four acetate groups of uroporphyrinogen-III to yield coproporphyrinogen-III. This Wolbachia sp. subsp. Drosophila simulans (strain wRi) protein is Uroporphyrinogen decarboxylase.